The primary structure comprises 35 residues: Photosystem II reaction center protein T (35 aa).

The helical transmembrane segment at 3-23 threads the bilayer; it reads ALVYTFLLISTLGIIFFAIFF.

Belongs to the PsbT family. PSII is composed of 1 copy each of membrane proteins PsbA, PsbB, PsbC, PsbD, PsbE, PsbF, PsbH, PsbI, PsbJ, PsbK, PsbL, PsbM, PsbT, PsbY, PsbZ, Psb30/Ycf12, at least 3 peripheral proteins of the oxygen-evolving complex and a large number of cofactors. It forms dimeric complexes.

Its subcellular location is the plastid. It localises to the chloroplast thylakoid membrane. Its function is as follows. Found at the monomer-monomer interface of the photosystem II (PS II) dimer, plays a role in assembly and dimerization of PSII. PSII is a light-driven water plastoquinone oxidoreductase, using light energy to abstract electrons from H(2)O, generating a proton gradient subsequently used for ATP formation. This Aristolochia macrophylla (Dutchman's pipe vine) protein is Photosystem II reaction center protein T.